Here is a 929-residue protein sequence, read N- to C-terminus: Valine--tRNA ligase (929 aa).

The 'HIGH' region motif lies at P59–H69. Positions K557–S561 match the 'KMSKS' region motif. K560 serves as a coordination point for ATP. Positions L862–G929 form a coiled coil.

This sequence belongs to the class-I aminoacyl-tRNA synthetase family. ValS type 1 subfamily. As to quaternary structure, monomer.

It is found in the cytoplasm. It carries out the reaction tRNA(Val) + L-valine + ATP = L-valyl-tRNA(Val) + AMP + diphosphate. Functionally, catalyzes the attachment of valine to tRNA(Val). As ValRS can inadvertently accommodate and process structurally similar amino acids such as threonine, to avoid such errors, it has a 'posttransfer' editing activity that hydrolyzes mischarged Thr-tRNA(Val) in a tRNA-dependent manner. The protein is Valine--tRNA ligase of Prochlorococcus marinus (strain MIT 9313).